The chain runs to 435 residues: Cyclic 2,3-diphosphoglycerate synthetase (435 aa).

The protein belongs to the cyclic 2,3-diphosphoglycerate synthetase family.

The protein localises to the cytoplasm. It catalyses the reaction (2R)-2,3-bisphosphoglycerate + ATP + H(+) = cyclic (2R)-2,3-bisphosphoglycerate + ADP + phosphate. Its function is as follows. Catalyzes the formation of cyclic 2,3-diphosphoglycerate (cDPG) by formation of an intramolecular phosphoanhydride bond at the expense of ATP. The polypeptide is Cyclic 2,3-diphosphoglycerate synthetase (Pyrococcus horikoshii (strain ATCC 700860 / DSM 12428 / JCM 9974 / NBRC 100139 / OT-3)).